A 324-amino-acid chain; its full sequence is ATP-dependent 6-phosphofructokinase (324 aa).

Gly-11 serves as a coordination point for ATP. 21–25 (RAVVR) provides a ligand contact to ADP. ATP-binding positions include 72–73 (RE) and 102–105 (GNGS). Residue Asn-103 coordinates Mg(2+). Position 126–128 (126–128 (TID)) interacts with substrate. Catalysis depends on Asp-128, which acts as the Proton acceptor. Residue Lys-155 participates in ADP binding. Substrate is bound by residues Arg-163 and 170–172 (MGR). ADP contacts are provided by residues 186–188 (GAE) and 214–216 (KNF). Substrate is bound by residues Glu-223, Arg-248, and 254 to 257 (YIQR).

This sequence belongs to the phosphofructokinase type A (PFKA) family. ATP-dependent PFK group I subfamily. Prokaryotic clade 'B1' sub-subfamily. In terms of assembly, homotetramer. Mg(2+) serves as cofactor.

It localises to the cytoplasm. It carries out the reaction beta-D-fructose 6-phosphate + ATP = beta-D-fructose 1,6-bisphosphate + ADP + H(+). It functions in the pathway carbohydrate degradation; glycolysis; D-glyceraldehyde 3-phosphate and glycerone phosphate from D-glucose: step 3/4. With respect to regulation, allosterically activated by ADP and other diphosphonucleosides, and allosterically inhibited by phosphoenolpyruvate. In terms of biological role, catalyzes the phosphorylation of D-fructose 6-phosphate to fructose 1,6-bisphosphate by ATP, the first committing step of glycolysis. The chain is ATP-dependent 6-phosphofructokinase from Sulfurihydrogenibium sp. (strain YO3AOP1).